Consider the following 129-residue polypeptide: Ribonuclease P protein component (129 aa).

The protein belongs to the RnpA family. Consists of a catalytic RNA component (M1 or rnpB) and a protein subunit.

The enzyme catalyses Endonucleolytic cleavage of RNA, removing 5'-extranucleotides from tRNA precursor.. Functionally, RNaseP catalyzes the removal of the 5'-leader sequence from pre-tRNA to produce the mature 5'-terminus. It can also cleave other RNA substrates such as 4.5S RNA. The protein component plays an auxiliary but essential role in vivo by binding to the 5'-leader sequence and broadening the substrate specificity of the ribozyme. This Prochlorococcus marinus (strain MIT 9515) protein is Ribonuclease P protein component.